The chain runs to 577 residues: Beta-fructofuranosidase, insoluble isoenzyme 1 (577 aa).

The first 22 residues, 1–22 (MGTRLLALAPWLLLLLLQLAGA), serve as a signal peptide directing secretion. Aspartate 63 is a catalytic residue. N-linked (GlcNAc...) asparagine glycosylation is found at asparagine 158, asparagine 183, and asparagine 333.

Belongs to the glycosyl hydrolase 32 family.

The protein resides in the secreted. It localises to the extracellular space. Its subcellular location is the apoplast. It is found in the cell wall. It catalyses the reaction Hydrolysis of terminal non-reducing beta-D-fructofuranoside residues in beta-D-fructofuranosides.. Its function is as follows. May play a role in sucrose partitioning during seed development and in stress response. The sequence is that of Beta-fructofuranosidase, insoluble isoenzyme 1 (CIN1) from Oryza sativa subsp. indica (Rice).